Reading from the N-terminus, the 512-residue chain is Maturase K (512 aa).

The protein belongs to the intron maturase 2 family. MatK subfamily.

The protein localises to the plastid. It localises to the chloroplast. Functionally, usually encoded in the trnK tRNA gene intron. Probably assists in splicing its own and other chloroplast group II introns. The protein is Maturase K of Lemna gibba (Swollen duckweed).